The sequence spans 352 residues: Heat-inducible transcription repressor HrcA (352 aa).

It belongs to the HrcA family.

Functionally, negative regulator of class I heat shock genes (grpE-dnaK-dnaJ and groELS operons). Prevents heat-shock induction of these operons. The polypeptide is Heat-inducible transcription repressor HrcA (Chlorobium phaeobacteroides (strain BS1)).